Reading from the N-terminus, the 225-residue chain is PKHD-type hydroxylase YbiX (225 aa).

One can recognise a Fe2OG dioxygenase domain in the interval 78–177 (TLSTPLFNRY…RVASFMWIQS (100 aa)). Fe cation-binding residues include His96, Asp98, and His158. Arg168 provides a ligand contact to 2-oxoglutarate.

The cofactor is Fe(2+). L-ascorbate is required as a cofactor.

The chain is PKHD-type hydroxylase YbiX from Shigella sonnei (strain Ss046).